A 344-amino-acid chain; its full sequence is Protein pelota homolog (344 aa).

The protein belongs to the eukaryotic release factor 1 family. Pelota subfamily. Monomer. The cofactor is a divalent metal cation.

The protein localises to the cytoplasm. Its function is as follows. May function in recognizing stalled ribosomes, interact with stem-loop structures in stalled mRNA molecules, and effect endonucleolytic cleavage of the mRNA. May play a role in the release non-functional ribosomes and degradation of damaged mRNAs. Has endoribonuclease activity. This is Protein pelota homolog from Saccharolobus islandicus (strain M.16.27) (Sulfolobus islandicus).